A 412-amino-acid chain; its full sequence is Cysteate synthase (412 aa).

K105 is subject to N6-(pyridoxal phosphate)lysine. Residues N131 and T382 each coordinate pyridoxal 5'-phosphate.

It belongs to the threonine synthase family. Cysteate synthase subfamily. In terms of assembly, homotrimer. Requires pyridoxal 5'-phosphate as cofactor.

It catalyses the reaction O-phospho-L-serine + sulfite + H(+) = L-cysteate + phosphate. It participates in cofactor biosynthesis; coenzyme M biosynthesis. Its function is as follows. Specifically catalyzes the beta-elimination of phosphate from L-phosphoserine and the beta-addition of sulfite to the dehydroalanine intermediate to produce L-cysteate. The chain is Cysteate synthase from Methanocorpusculum labreanum (strain ATCC 43576 / DSM 4855 / Z).